Reading from the N-terminus, the 437-residue chain is Aromatic peroxidase fscJ (437 aa).

The first 19 residues, 1–19 (MKWLHLLSVVACVADEVYA), serve as a signal peptide directing secretion. C83 contributes to the heme binding site.

The protein belongs to the chloroperoxidase family. Heme b serves as cofactor.

Its pathway is secondary metabolite biosynthesis. Functionally, aromatic peroxidase; part of the fragmented gene cluster that mediates the biosynthesis of fusarochromene, a tryptophan-derived metabolite closely related to a group of mycotoxins including fusarochromanone. The role of fscJ within the pathway has not been identified yet. The first step of the pathway is the epimerization of L-tryptophan to D-tryptophan in the presence of the NRPS-like tryptophan epimerase fscC. D-tryptophan is subsequently hydroxylated by the tryptophan 6-hydroxylase fscE to yield 6-hydroxytryptophan. The pyrrole ring undergoes cleavaged by the tryptophan 2,3-dioxygenase fscD and is finally converted to 4-hydroxykyrunenine by the hydrolase fscH. The NRPS-like oxidoreductase fscA reduces the carboxyl group to primary alcohol and the DMATS-type prenyltransferase fscG performs prenylation, followed by the formation of a chromene ring catalyzed by the oxidoreductase fscI, which leads to desacetylfusarochromene. Epoxidation by fscF and rearrangement reactions of chromene double bonds convert compound desacetylfusarochromene to fusarochromanones. Although specific acetyltransferases were not found near the fsc gene cluster, several predicted enzymes containing the N-acetyltransferase superfamily domain are present in the genome of F.equiseti. These predicted enzymes may have the potential to convert desacetylfusarochromene to fusarochromene. The chain is Aromatic peroxidase fscJ from Fusarium equiseti (Fusarium scirpi).